A 246-amino-acid chain; its full sequence is DNA repair protein RecO (246 aa).

It belongs to the RecO family.

In terms of biological role, involved in DNA repair and RecF pathway recombination. In Methylobacterium nodulans (strain LMG 21967 / CNCM I-2342 / ORS 2060), this protein is DNA repair protein RecO.